The chain runs to 483 residues: Triacylglycerol lipase ptl3 (483 aa).

The PNPLA domain occupies 141–340 (LILSGGGTFG…DNDIPHAKLT (200 aa)). The GXGXXG motif lies at 145–150 (GGGTFG). The GXSXG signature appears at 172-176 (GSSAG). The active-site Nucleophile is Ser174. The Proton acceptor role is filled by Asp327.

The protein localises to the cytoplasm. It localises to the lipid droplet. The enzyme catalyses a triacylglycerol + H2O = a diacylglycerol + a fatty acid + H(+). Its function is as follows. Lipid particle-localized triacylglycerol (TAG) lipase. The lipid droplet/particle is a lipid storage compartment which serves as a depot of energy and building blocks for membrane lipid biosynthesis. Involved in the mobilization of the non-polar storage lipids triacylglycerols (TAGs) from lipid particles by hydrolysis of TAGs, releasing and supplying specific fatty acids to the appropriate metabolic pathways. In Schizosaccharomyces pombe (strain 972 / ATCC 24843) (Fission yeast), this protein is Triacylglycerol lipase ptl3 (ptl3).